The primary structure comprises 225 residues: Thymidine kinase (225 aa).

8–15 contributes to the ATP binding site; that stretch reads GPMFSGKT. Glu-92 (proton acceptor) is an active-site residue. Tyr-122 is a substrate binding site. 2 residues coordinate Zn(2+): Cys-147 and Cys-150. 167-171 serves as a coordination point for substrate; it reads KILVG. The Zn(2+) site is built by Cys-180 and Cys-183. The span at 197–207 shows a compositional bias: polar residues; the sequence is SEQINNQTELS. Positions 197–225 are disordered; sequence SEQINNQTELSEPTRQKESLKIKKRRIDS. Residues 208-225 are compositionally biased toward basic and acidic residues; that stretch reads EPTRQKESLKIKKRRIDS.

It belongs to the thymidine kinase family.

It catalyses the reaction thymidine + ATP = dTMP + ADP + H(+). The protein is Thymidine kinase (TK) of Acanthamoeba polyphaga mimivirus (APMV).